Here is a 653-residue protein sequence, read N- to C-terminus: tRNA-guanine(15) transglycosylase (653 aa).

Asp-91 acts as the Nucleophile in catalysis. Substrate contacts are provided by Asp-126 and Ala-193. Positions 276, 278, and 281 each coordinate Zn(2+). Positions 578-653 (AWRVAVNEES…QAVKTRKGGF (76 aa)) constitute a PUA domain.

The protein belongs to the archaeosine tRNA-ribosyltransferase family. It depends on Zn(2+) as a cofactor.

The catalysed reaction is guanosine(15) in tRNA + 7-cyano-7-deazaguanine = 7-cyano-7-carbaguanosine(15) in tRNA + guanine. It functions in the pathway tRNA modification; archaeosine-tRNA biosynthesis. Its function is as follows. Exchanges the guanine residue with 7-cyano-7-deazaguanine (preQ0) at position 15 in the dihydrouridine loop (D-loop) of archaeal tRNAs. This Methanothermobacter thermautotrophicus (strain ATCC 29096 / DSM 1053 / JCM 10044 / NBRC 100330 / Delta H) (Methanobacterium thermoautotrophicum) protein is tRNA-guanine(15) transglycosylase.